The primary structure comprises 3491 residues: Erythronolide synthase EryA1 (3491 aa).

The loading domain stretch occupies residues 1-484; sequence MSGPRSRTTS…TPRALAEALA (484 aa). Positions 57–372 are acyltransferase 1; it reads VFVFPGQGAQ…AAQAFTGGVA (316 aa). S145 functions as the Acyl-ester intermediate; for acyltransferase 1 activity in the catalytic mechanism. Residues 386 to 410 are disordered; it reads PALCRSSRRPRRKTSRPSPASTGTR. Positions 391–400 are enriched in basic residues; the sequence is SSRRPRRKTS. In terms of domain architecture, Carrier 1 spans 412–487; that stretch reads RTCCERLLAV…ALAEALAAGT (76 aa). Position 447 is an O-(pantetheine 4'-phosphoryl)serine (S447). The Ketosynthase family 3 (KS3) 1 domain maps to 504–928; sequence GEPVAVVAMA…GTNAHAIIEE (425 aa). 2 module regions span residues 507–1958 and 1982–3404; these read VAVV…AHLA and IAIV…GFLD. C677 (acyl-thioester intermediate; for beta-ketoacyl synthase 1 activity) is an active-site residue. Active-site for beta-ketoacyl synthase 1 activity residues include H812 and H850. The segment at 1031–1352 is acyltransferase 2; that stretch reads VFVFPGQGWQ…ALSRAFAAGV (322 aa). Residue S1128 is the Acyl-ester intermediate; for acyltransferase 2 activity of the active site. The tract at residues 1613–1790 is beta-ketoacyl reductase 1; the sequence is GTVLVTGGTG…ATAVAWGTWA (178 aa). NADP(+) contacts are provided by residues 1621 to 1624, 1644 to 1647, 1673 to 1674, K1723, and 1745 to 1746; these read TGGV, SRSG, DV, and FS. Y1760 functions as the For beta-ketoacyl reductase 1 activity in the catalytic mechanism. In terms of domain architecture, Carrier 2 spans 1886–1961; it reads EALFELVRSH…TLAAHLAAEL (76 aa). S1921 is modified (O-(pantetheine 4'-phosphoryl)serine). In terms of domain architecture, Ketosynthase family 3 (KS3) 2 spans 1979–2402; it reads DEPIAIVGMA…GTNAHVIIAE (424 aa). The Acyl-thioester intermediate; for beta-ketoacyl synthase 2 activity role is filled by C2148. Catalysis depends on for beta-ketoacyl synthase 2 activity residues H2283 and H2323. The tract at residues 2508–2827 is acyltransferase 3; sequence VFVFPGQGAQ…LADAHTRGVA (320 aa). The active-site Acyl-ester intermediate; for acyltransferase 3 activity is S2598. Residues 3057–3233 form a beta-ketoacyl reductase 2 region; the sequence is GTILVTGGTA…ATSVAWGLWA (177 aa). Residues 3065–3068, 3088–3091, 3117–3118, K3168, and 3188–3189 each bind NADP(+); these read TAGL, SRRG, DV, and FS. Residue Y3203 is the For beta-ketoacyl reductase 2 activity of the active site. A Carrier 3 domain is found at 3329–3407; the sequence is ERTAELVRLV…AVAGFLDAEL (79 aa). S3367 carries the post-translational modification O-(pantetheine 4'-phosphoryl)serine. The disordered stretch occupies residues 3456-3491; the sequence is QAADASGTGANPSGDDLGEAGVDELLEALGRELDGD. The segment covering 3471–3481 has biased composition (acidic residues); sequence DLGEAGVDELL.

As to quaternary structure, homodimer. Erythronolide synthase is composed of EryAI, EryAII and EryAIII multimodular (2 modules) polypeptides each coding for a functional synthase subunit which participates in 2 of the six FAS-like elongation steps required for formation of the polyketide. Module 1, 2, 3, 4, 5, and 6 participating in biosynthesis steps 1, 2, 3, 4, 5, and 6, respectively. It depends on pantetheine 4'-phosphate as a cofactor.

It catalyses the reaction 6 (S)-methylmalonyl-CoA + propanoyl-CoA + 6 NADPH + 12 H(+) = 6-deoxyerythronolide B + 6 CO2 + 6 NADP(+) + 7 CoA + H2O. It functions in the pathway antibiotic biosynthesis; erythromycin biosynthesis. Involved in the biosynthesis of antibiotic erythromycin via the biosynthesis of its aglycone precursor, 6-deoxyerythronolide B (6-dEB). In Saccharopolyspora erythraea (Streptomyces erythraeus), this protein is Erythronolide synthase EryA1 (eryA).